The sequence spans 91 residues: C-C motif chemokine 5 (91 aa).

A signal peptide spans 1 to 23 (MKVSAATFAILLATATFRAPASA). Cystine bridges form between Cys33–Cys57 and Cys34–Cys73.

It belongs to the intercrine beta (chemokine CC) family.

It is found in the secreted. Its function is as follows. Chemoattractant for blood monocytes, memory T-helper cells and eosinophils. Causes the release of histamine from basophils and activates eosinophils. May activate several chemokine receptors including CCR1, CCR3, CCR4 and CCR5. May also be an agonist of the G protein-coupled receptor GPR75. Together with GPR75, may play a role in neuron survival through activation of a downstream signaling pathway involving the PI3, Akt and MAP kinases. By activating GPR75 may also play a role in insulin secretion by islet cells. The chain is C-C motif chemokine 5 (CCL5) from Canis lupus familiaris (Dog).